A 329-amino-acid polypeptide reads, in one-letter code: GTP 3',8-cyclase (329 aa).

A Radical SAM core domain is found at 1–229 (MNPVDYLRIS…TAFVQGNGPA (229 aa)). GTP is bound at residue R8. Residues C15 and C19 each contribute to the [4Fe-4S] cluster site. Position 21 (Y21) interacts with S-adenosyl-L-methionine. Position 22 (C22) interacts with [4Fe-4S] cluster. R60 serves as a coordination point for GTP. G64 lines the S-adenosyl-L-methionine pocket. A GTP-binding site is contributed by T91. S115 serves as a coordination point for S-adenosyl-L-methionine. A GTP-binding site is contributed by K155. M189 contacts S-adenosyl-L-methionine. 2 residues coordinate [4Fe-4S] cluster: C252 and C255. 257–259 (RMR) lines the GTP pocket. C269 is a binding site for [4Fe-4S] cluster.

Belongs to the radical SAM superfamily. MoaA family. In terms of assembly, monomer and homodimer. [4Fe-4S] cluster is required as a cofactor.

It carries out the reaction GTP + AH2 + S-adenosyl-L-methionine = (8S)-3',8-cyclo-7,8-dihydroguanosine 5'-triphosphate + 5'-deoxyadenosine + L-methionine + A + H(+). Its pathway is cofactor biosynthesis; molybdopterin biosynthesis. Catalyzes the cyclization of GTP to (8S)-3',8-cyclo-7,8-dihydroguanosine 5'-triphosphate. This Picosynechococcus sp. (strain ATCC 27264 / PCC 7002 / PR-6) (Agmenellum quadruplicatum) protein is GTP 3',8-cyclase.